The following is a 103-amino-acid chain: N(4)-acetylcytidine amidohydrolase (103 aa).

The ASCH domain occupies 6–101 (ITFFQRFQDD…QTQFYVIEFK (96 aa)). Lys-21 acts as the Proton acceptor in catalysis. Residue Thr-24 is the Nucleophile of the active site. Glu-74 acts as the Proton donor in catalysis.

This sequence belongs to the N(4)-acetylcytidine amidohydrolase family.

The enzyme catalyses N(4)-acetylcytidine + H2O = cytidine + acetate + H(+). The catalysed reaction is N(4)-acetyl-2'-deoxycytidine + H2O = 2'-deoxycytidine + acetate + H(+). It catalyses the reaction N(4)-acetylcytosine + H2O = cytosine + acetate + H(+). Its function is as follows. Catalyzes the hydrolysis of N(4)-acetylcytidine (ac4C). The polypeptide is N(4)-acetylcytidine amidohydrolase (yqfB) (Escherichia coli O81 (strain ED1a)).